We begin with the raw amino-acid sequence, 363 residues long: MRDETPEQPAPLRFGYTTGSCASATSLAAARLLLTGVASDTVDIVLPKGQHVAMRLAFCRATDDGGAEAGTIKDAGDDPDVTHGALVFARVRLVHEPGVRFRAGPGVGTVTRAGLPIAVGEPAINPVPRRMMTEHLAALAAEHGYAGGFDVAIGVENGEALARKTMNPRLGIVGGLSILGTTGIVRPFSCSAYIASIHQGIDVARANGVTHIAACTGNASEDAVRARYGLPDIALIEMGDFAGAVLKYLRRASVARLTLCGGFGKLSKLAAGHLDLHSRHSSIDLPLLAEWAGEAGASAVLQHEIRAANTSQQALALALAHHVPLGDVVCAHARRVARDIVPGEVDVETLAIDREGRIVGVVP.

Belongs to the CbiD family.

The catalysed reaction is Co-precorrin-5B + S-adenosyl-L-methionine = Co-precorrin-6A + S-adenosyl-L-homocysteine. Its pathway is cofactor biosynthesis; adenosylcobalamin biosynthesis; cob(II)yrinate a,c-diamide from sirohydrochlorin (anaerobic route): step 6/10. Catalyzes the methylation of C-1 in cobalt-precorrin-5B to form cobalt-precorrin-6A. This is Cobalt-precorrin-5B C(1)-methyltransferase from Burkholderia mallei (strain ATCC 23344).